The chain runs to 496 residues: MERQKSMEKGLLRKSLSIRERKFPNEDAFLESGLSRKSPREVKKPQNDDGECRVTASVFLSTFVAVSGSFCTGCGVGFSSGAQAGITKDLSLSVAEYSMFGSILTLGGLIGAVFSGKVADVLGRKRTMLFCEFFCITGWLCVALAQNAMWLDCGRLLLGIGVGIFSYVIPVYIAEIAPKHVRGSFVFANQLMQNCGISLFFIIGNFIPWRLLTVVGLVPCVFHVFCLFFIPESPRWLAKLGRDKECRSSLQRLRGSDVDISREANTIRDTIDMTENGGETKMSELFQRRYAYPLIIGVGLMFLQQLCGSSGVTYYASSLFNKGGFPSAIGTSVIATIMVPKAMLATVLVDKMGRRTLLMASCSAMGLSALLLSVSYGFQSFGILPELTPIFTCIGVLGHIVSFAMGMGGLPWIIMAEIFPMNVKVSAGTLVTVTNWLFGWIITYTFNFMLEWNASGMFLIFSMVSASSIVFIYFLVPETKGRSLEEIQALLNNSVQ.

6 consecutive transmembrane segments (helical) span residues 58–78 (VFLS…GVGF), 94–114 (VAEY…GAVF), 128–148 (MLFC…AQNA), 156–176 (LLLG…IAEI), 183–203 (GSFV…FFII), and 211–231 (LLTV…FFIP). Residue Ser-256 is modified to Phosphoserine. 6 helical membrane passes run 292 to 312 (YPLI…SSGV), 329 to 349 (IGTS…TVLV), 364 to 384 (AMGL…FGIL), 394 to 414 (IGVL…PWII), 430 to 450 (LVTV…NFML), and 456 to 476 (GMFL…YFLV).

It belongs to the major facilitator superfamily. Sugar transporter (TC 2.A.1.1) family. As to expression, expressed in both shoots and roots. In roots, expressed in epidermal cells and especially strongly in cortex cells. In flowers, expressed in sepals.

The protein resides in the membrane. Sugar transporter. This is Sugar transporter ERD6 (ERD6) from Arabidopsis thaliana (Mouse-ear cress).